Reading from the N-terminus, the 140-residue chain is Translation initiation factor 2 subunit beta (140 aa).

This sequence belongs to the eIF-2-beta/eIF-5 family. Heterotrimer composed of an alpha, a beta and a gamma chain.

Functionally, eIF-2 functions in the early steps of protein synthesis by forming a ternary complex with GTP and initiator tRNA. In Pyrococcus abyssi (strain GE5 / Orsay), this protein is Translation initiation factor 2 subunit beta (eif2b).